The following is a 259-amino-acid chain: Ribosomal RNA small subunit methyltransferase A (259 aa).

Residues asparagine 13, leucine 15, glycine 40, glutamate 61, aspartate 85, and asparagine 103 each contribute to the S-adenosyl-L-methionine site.

It belongs to the class I-like SAM-binding methyltransferase superfamily. rRNA adenine N(6)-methyltransferase family. RsmA subfamily.

It localises to the cytoplasm. It carries out the reaction adenosine(1518)/adenosine(1519) in 16S rRNA + 4 S-adenosyl-L-methionine = N(6)-dimethyladenosine(1518)/N(6)-dimethyladenosine(1519) in 16S rRNA + 4 S-adenosyl-L-homocysteine + 4 H(+). In terms of biological role, specifically dimethylates two adjacent adenosines (A1518 and A1519) in the loop of a conserved hairpin near the 3'-end of 16S rRNA in the 30S particle. May play a critical role in biogenesis of 30S subunits. In Neisseria gonorrhoeae (strain ATCC 700825 / FA 1090), this protein is Ribosomal RNA small subunit methyltransferase A.